A 75-amino-acid chain; its full sequence is ATP synthase subunit c (75 aa).

2 consecutive transmembrane segments (helical) span residues 8-28 (FLGIGLSVVGMLGAAIGVSNI) and 54-74 (AALTEAMGLFSFVLALLLIFV).

The protein belongs to the ATPase C chain family. In terms of assembly, F-type ATPases have 2 components, F(1) - the catalytic core - and F(0) - the membrane proton channel. F(1) has five subunits: alpha(3), beta(3), gamma(1), delta(1), epsilon(1). F(0) has three main subunits: a(1), b(2) and c(10-14). The alpha and beta chains form an alternating ring which encloses part of the gamma chain. F(1) is attached to F(0) by a central stalk formed by the gamma and epsilon chains, while a peripheral stalk is formed by the delta and b chains.

It localises to the cell inner membrane. F(1)F(0) ATP synthase produces ATP from ADP in the presence of a proton or sodium gradient. F-type ATPases consist of two structural domains, F(1) containing the extramembraneous catalytic core and F(0) containing the membrane proton channel, linked together by a central stalk and a peripheral stalk. During catalysis, ATP synthesis in the catalytic domain of F(1) is coupled via a rotary mechanism of the central stalk subunits to proton translocation. Its function is as follows. Key component of the F(0) channel; it plays a direct role in translocation across the membrane. A homomeric c-ring of between 10-14 subunits forms the central stalk rotor element with the F(1) delta and epsilon subunits. This chain is ATP synthase subunit c, found in Neorickettsia sennetsu (strain ATCC VR-367 / Miyayama) (Ehrlichia sennetsu).